A 95-amino-acid polypeptide reads, in one-letter code: Small ribosomal subunit protein bS6 (95 aa).

The protein belongs to the bacterial ribosomal protein bS6 family.

In terms of biological role, binds together with bS18 to 16S ribosomal RNA. In Corynebacterium glutamicum (strain ATCC 13032 / DSM 20300 / JCM 1318 / BCRC 11384 / CCUG 27702 / LMG 3730 / NBRC 12168 / NCIMB 10025 / NRRL B-2784 / 534), this protein is Small ribosomal subunit protein bS6.